The chain runs to 557 residues: Dihydroxy-acid dehydratase (557 aa).

Cysteine 50 provides a ligand contact to [2Fe-2S] cluster. Aspartate 82 provides a ligand contact to Mg(2+). A [2Fe-2S] cluster-binding site is contributed by cysteine 123. 2 residues coordinate Mg(2+): aspartate 124 and lysine 125. Lysine 125 is subject to N6-carboxylysine. Cysteine 195 contacts [2Fe-2S] cluster. Glutamate 447 contacts Mg(2+). Serine 473 functions as the Proton acceptor in the catalytic mechanism.

It belongs to the IlvD/Edd family. As to quaternary structure, homodimer. [2Fe-2S] cluster serves as cofactor. Mg(2+) is required as a cofactor.

It catalyses the reaction (2R)-2,3-dihydroxy-3-methylbutanoate = 3-methyl-2-oxobutanoate + H2O. It carries out the reaction (2R,3R)-2,3-dihydroxy-3-methylpentanoate = (S)-3-methyl-2-oxopentanoate + H2O. The protein operates within amino-acid biosynthesis; L-isoleucine biosynthesis; L-isoleucine from 2-oxobutanoate: step 3/4. It functions in the pathway amino-acid biosynthesis; L-valine biosynthesis; L-valine from pyruvate: step 3/4. Functions in the biosynthesis of branched-chain amino acids. Catalyzes the dehydration of (2R,3R)-2,3-dihydroxy-3-methylpentanoate (2,3-dihydroxy-3-methylvalerate) into 2-oxo-3-methylpentanoate (2-oxo-3-methylvalerate) and of (2R)-2,3-dihydroxy-3-methylbutanoate (2,3-dihydroxyisovalerate) into 2-oxo-3-methylbutanoate (2-oxoisovalerate), the penultimate precursor to L-isoleucine and L-valine, respectively. This chain is Dihydroxy-acid dehydratase, found in Burkholderia thailandensis (strain ATCC 700388 / DSM 13276 / CCUG 48851 / CIP 106301 / E264).